We begin with the raw amino-acid sequence, 233 residues long: Large ribosomal subunit protein uL1 (233 aa).

This sequence belongs to the universal ribosomal protein uL1 family. As to quaternary structure, part of the 50S ribosomal subunit.

Its function is as follows. Binds directly to 23S rRNA. The L1 stalk is quite mobile in the ribosome, and is involved in E site tRNA release. Functionally, protein L1 is also a translational repressor protein, it controls the translation of the L11 operon by binding to its mRNA. The protein is Large ribosomal subunit protein uL1 of Brucella suis (strain ATCC 23445 / NCTC 10510).